A 21-amino-acid chain; its full sequence is Cytoplasmic filament protein A (21 aa).

The tract at residues 1–21 is disordered; sequence AILELPQSPNVFHPEKPSAVG.

Its subcellular location is the cytoplasm. Functionally, component of the cytoplasmic filaments that run the length of the organism just underneath the cytoplasmic membrane. The polypeptide is Cytoplasmic filament protein A (cfpA) (Treponema phagedenis).